The following is a 797-amino-acid chain: Calcium-transporting ATPase CtpE (797 aa).

The next 3 helical transmembrane spans lie at 55 to 75, 215 to 235, and 254 to 274; these read LLLIVLATGSLINGMFGLLII, ILQFITYLLVPAGLLTIYTQL, and VPMVPEGLVLMTSIAFAVGVV. The active-site 4-aspartylphosphate intermediate is Asp-301. The Mg(2+) site is built by Asp-301, Thr-303, and Asp-536. A run of 6 helical transmembrane segments spans residues 601-621, 633-653, 667-687, 703-723, 729-749, and 764-784; these read TVYSVLLALLVGIECLIAIPL, IHVTIAAWFTIGIPAFILSLA, VMTSAVPFGLVIGVATFVTYL, ASTAALITLLMTALWVLAVIA, WRLALVLASGLAYVVIFSLPL, and TSIALAVGVVGAATIEAMWWI.

The protein belongs to the cation transport ATPase (P-type) (TC 3.A.3) family.

It localises to the cell membrane. The catalysed reaction is Ca(2+)(in) + ATP + H2O = Ca(2+)(out) + ADP + phosphate + H(+). Its function is as follows. P-type ATPase involved in specific uptake of calcium. The polypeptide is Calcium-transporting ATPase CtpE (ctpE) (Mycobacterium bovis (strain ATCC BAA-935 / AF2122/97)).